Here is a 252-residue protein sequence, read N- to C-terminus: Uridylate kinase (252 aa).

24–27 (KLSG) provides a ligand contact to ATP. The tract at residues 32–37 (GEEGFG) is involved in allosteric activation by GTP. Glycine 66 contacts UMP. ATP contacts are provided by glycine 67 and arginine 71. Residues aspartate 86 and 147–154 (TGNPFFTT) each bind UMP. Positions 174, 180, and 183 each coordinate ATP.

It belongs to the UMP kinase family. As to quaternary structure, homohexamer.

It localises to the cytoplasm. It catalyses the reaction UMP + ATP = UDP + ADP. Its pathway is pyrimidine metabolism; CTP biosynthesis via de novo pathway; UDP from UMP (UMPK route): step 1/1. With respect to regulation, allosterically activated by GTP. Inhibited by UTP. Catalyzes the reversible phosphorylation of UMP to UDP. The chain is Uridylate kinase from Alcanivorax borkumensis (strain ATCC 700651 / DSM 11573 / NCIMB 13689 / SK2).